The following is a 168-amino-acid chain: Tyrosine-protein phosphatase (168 aa).

Residues 24 to 168 (FKTPLRPELF…RQNYVQDLLI (145 aa)) form the Tyrosine-protein phosphatase domain. Cysteine 119 (phosphocysteine intermediate) is an active-site residue.

Belongs to the protein-tyrosine phosphatase family. Non-receptor class CDC14 subfamily.

It carries out the reaction O-phospho-L-tyrosyl-[protein] + H2O = L-tyrosyl-[protein] + phosphate. In terms of biological role, plays a role in the regulation and processing of late viral mRNAs by displaying RNA 5'-triphosphatase and diphosphatase activities. The polypeptide is Tyrosine-protein phosphatase (PTP) (Autographa californica nuclear polyhedrosis virus (AcMNPV)).